The primary structure comprises 1440 residues: Pentatricopeptide repeat-containing protein At3g18110, chloroplastic (1440 aa).

Residues 1–44 constitute a chloroplast transit peptide; it reads MAVSAGALAFPALSVRATLNPEIKDEQANISSTTSSSQKFTYSR. The span at 63-72 shows a compositional bias: polar residues; that stretch reads TPSQTLSSPV. Residues 63 to 84 are disordered; sequence TPSQTLSSPVSPIAGTPDSGDV. 25 PPR repeats span residues 224 to 258, 259 to 295, 296 to 330, 331 to 365, 366 to 400, 401 to 431, 437 to 471, 472 to 506, 507 to 541, 542 to 572, 608 to 638, 643 to 678, 680 to 714, 715 to 749, 751 to 785, 786 to 820, 821 to 855, 856 to 890, 891 to 925, 926 to 960, 961 to 995, 996 to 1030, 1031 to 1065, 1066 to 1100, and 1101 to 1135; these read RVQV…GCVP, DLIS…GLRP, DAIT…RCQP, DLWT…GFFP, DAVT…GFGK, DEMT…MKGL, DAIT…GIKP, TLQT…GTKP, DNLA…GHTP, SYTL…MEEL, ENDT…LKEH, KRLI…GWCF, SSTM…GCEA, SESV…GFHF, CSPM…GRTP, DLKT…GPSP, TVES…GFKI, SKSS…GYLP, TIRL…NFKV, ELAI…GLEP, DETT…GLDP, KLDT…GLKL, DRSF…GIEP, TLAT…EVEL, and TTLP…GLEP. Residues 1419–1440 are disordered; sequence KKKKMGNETNGINTRRKFVRSK.

It belongs to the PPR family. P subfamily.

The protein resides in the plastid. Its subcellular location is the chloroplast. In terms of biological role, may play a role in embryogenesis. The sequence is that of Pentatricopeptide repeat-containing protein At3g18110, chloroplastic (EMB1270) from Arabidopsis thaliana (Mouse-ear cress).